The chain runs to 173 residues: Putative pre-16S rRNA nuclease (173 aa).

Belongs to the YqgF nuclease family.

It localises to the cytoplasm. Could be a nuclease involved in processing of the 5'-end of pre-16S rRNA. This is Putative pre-16S rRNA nuclease from Psychrobacter cryohalolentis (strain ATCC BAA-1226 / DSM 17306 / VKM B-2378 / K5).